The primary structure comprises 529 residues: MAPEMDQFYRSTMAIYKSIMEQFNPALENLVYLGNNYLRAFHALSEAAEVYFSAIQKIGERALQSPTSQILGEILVQMSDTQRHLNSDLEVVVQTFHGGLLQHMEKNTKLDMQFIKDSRQHYELEYRHRAANLEKCMSELWRMERKRDKNVREMKESVNRLHAQMQAFVSESQRAAELEEKRRYRFLAEKHLLLSNTFLQFFGRARGMLQNRVLLWKEQSEASRSPSRAHSPGLLGPALGPPYPSGRLTPTCLDMPPRPLGEFSSPRSRHGSGSYGTEPDARPASQLEPDRRSLPRTPSASSLYSGSAQSSRSNSFGERPGGGGGARRVRALVSHSEGANHTLLRFSAGDVVEVLVPEAQNGWLYGKLEGSSASGWFPEAYVKALEEGPVNPMTPVTPMTSMTSMSPMTPMNPGNELPSRSYPLRGSHSLDDLLDRPGNSIAPSEYWDGQSRSRTPSRVPSRAPSPAPPPLPSSRRSSMGSTAVATDVKKLMSSEQYPPQELFPRGTNPFATVKLRPTITNDRSAPLIR.

An IMD domain is found at 1-239; that stretch reads MAPEMDQFYR…HSPGLLGPAL (239 aa). Disordered stretches follow at residues 221-327 and 403-510; these read EASR…GGAR and TSMS…TNPF. 3 positions are modified to phosphoserine: Ser-231, Ser-272, and Ser-302. Residues 299 to 313 are compositionally biased toward low complexity; that stretch reads SASSLYSGSAQSSRS. The SH3 domain maps to 324 to 387; that stretch reads GGARRVRALV…PEAYVKALEE (64 aa). Low complexity-rich tracts occupy residues 403–413 and 452–462; these read TSMSPMTPMNP and RSRTPSRVPSR. A compositionally biased stretch (pro residues) spans 463-472; sequence APSPAPPPLP. Phosphoserine is present on residues Ser-478 and Ser-481.

Expressed in the epithelial layer of the intestine (at protein level).

The protein resides in the cell membrane. It localises to the cell junction. The protein localises to the cytoplasmic vesicle membrane. Its function is as follows. Phosphoinositides-binding protein that induces the formation of planar or gently curved membrane structures. Binds to phosphoinositides, including to phosphatidylinositol 4,5-bisphosphate (PtdIns(4,5)P2) headgroups. There seems to be no clear preference for a specific phosphoinositide. This chain is BAR/IMD domain-containing adapter protein 2-like 2 (BAIAP2L2), found in Homo sapiens (Human).